We begin with the raw amino-acid sequence, 286 residues long: MSGLYNNSSYFSPARAASPQIRSTPEIDSSQYLTELLAEHQKLTPFMQVLPICSRLLNQEMFRVSGMMSNQGFGDFDRLRHRSPSPMASSNLMSNVSNTGLGGWNGLSQERLSGTPGMTMDWQGAPGSPSSYTVKRILRLEIPVDNYPNFNFVGRLLGPRGNSLKRVEATTGCRVFIRGKGSIKDPEKEDKLRGRPGYEHLNEQLHILIEADLPASIVEIRLRQAQEIIEELLKPVDESQDFIKRQQLRELALLNSNNLREESPGPSGGGSVSPFNSSGKRPKTGC.

At Ser-2 the chain carries N-acetylserine. The KH domain maps to 141 to 208 (EIPVDNYPNF…EHLNEQLHIL (68 aa)). Residues 256–286 (SNNLREESPGPSGGGSVSPFNSSGKRPKTGC) form a disordered region. Residues Ser-263 and Ser-273 each carry the phosphoserine modification.

Its subcellular location is the nucleus. This is KH domain-containing protein At2g38610 from Arabidopsis thaliana (Mouse-ear cress).